Reading from the N-terminus, the 392-residue chain is MPPKKQQEVVKVQWGRPGNNLKTGIVGMPNVGKSTFFRAITKSVLGNPANYPYATIDPEEAKVAVPDERFDWLCEAYKPKSRVPAFLTVFDIAGLTKGASTGVGLGNAFLSHVRAVDAIYQVVRAFDDAEIIHVEGDVDPIRDLSIIVDELLIKDAEFVEKHLEGLRKITSRGANTLEMKAKKEEQAIIEKVYQYLTETKQPIRKGDWSNREVEIINSLYLLTAKPVIYLVNMSERDFLRQKNKYLPKIKKWIDENSPGDTLIPMSVAFEERLTNFTEEEAIEECKKLNTKSMLPKIIVTGYNALNLINYFTCGEDEVRSWTIRKGTKAPQAAGVIHTDFEKAFVVGEIMHYQDLFDYKTENACRAAGKYLTKGKEYVMESGDIAHWKAGKR.

Residues 21–285 (LKTGIVGMPN…FTEEEAIEEC (265 aa)) form the OBG-type G domain. 30–35 (NVGKST) contributes to the ATP binding site. Mg(2+) contacts are provided by S34 and T55. ATP is bound at residue M233. One can recognise a TGS domain in the interval 306 to 389 (NLINYFTCGE…ESGDIAHWKA (84 aa)).

This sequence belongs to the TRAFAC class OBG-HflX-like GTPase superfamily. OBG GTPase family. YchF/OLA1 subfamily. As to quaternary structure, monomer. It depends on Mg(2+) as a cofactor.

It localises to the cytoplasm. The protein resides in the nucleus. In terms of biological role, hydrolyzes ATP, and can also hydrolyze GTP with lower efficiency. Has lower affinity for GTP. Negatively regulates the G2/M transition in the cell cycle. The protein is Obg-like ATPase 1 of Schizosaccharomyces pombe (strain 972 / ATCC 24843) (Fission yeast).